The primary structure comprises 1502 residues: MENRGQKRMEVVEELPADKRACNSQDFRPSTSGSSVQAQANDTNPGHENVDADMDTSSSASPSSRSDEEEQEEQDKEDSDYGSCDSDEEDPRQRVLQDYQRQRSSGDHGKLKSLLLNLTGETDPSGQLSRLTELCEVLSFSTEESLSSVMANMLSPVLVKLAKHENNADIMLLAIRAITYLCDVYPPSVEFLVRHDTIPALCQRLLTIEYLDVAEQCLQALEKISRDEPVACLNAGAIMAVLSFIDFFSTSIQRVAISTVVNICKQLSSESPSPFMDAVPILCTLLQYEDRQLVENVAICLTKIADQASESPAMLDQLCRHGLINESTHLLNLNSRTTLSQPVYNGVIGMLRKLSSGSALAFRTLYELNIGYSLKEIMSTYDISHSVSSTHPINACSNQVHEVLKLVIELLPASPVEDNQLASEKESFLVNQPDLLQQFGRDMLPVMIQVLNSGANVYVSYGCLSAIHKLTCLSKSGDIVELLKNTNMSSVLAGILSRKDHHVIVVALQVAEVLLEKYRDTFLNSFIKEGVFFAIEALLSSDRGQQNQGSADLSQKPVTKEIVKCLCQSFERSLSSSSQTCKIEKDSVYVLATRIKEGFFGPEVFNSEKGLTDVLQNLKNLSVALSELMTVPIDAHVLHDEKFFSIWNQIMERLNGRESVSTFEFIESGVVKSLASYLSNGLYQRKLSKGGPECDSLPFIGKRFEVFTRLLWSDGEATSSLLIQKLQNSLSSLENFPIVLSQFLKQKNSFAAIPNGRCTSYPCLKVRFLKAEGETSLRDYSQDFVTVDPLCYLDAVDQYLWPKVNIEPIDSVEAKDQAIECQSSQLQSTSISCQAESSSPMEIDSESSDASQLQGSQVEDQTQLPGQQNASSSETSSEKEDAVPRLLFRLEGLELDRSLTVYQAILLHKLKSESEATNDSKLSGPHNITYERSAQLGDSRENLFPPGSMEDDEYRPFLSYLFTHRLALRLKGSSHPPYDILFLLKSLEGMNRFLFHLISLERINAFGEGRLENLDDLRVQVRPVPHSEFVSSKLTEKLEQQLRDSFAVSTCGLPPWFNDLMDSCPCLFSFEAKSKYFRLAAFGSQKIRHHPQHLSSSNVHGEARPVTGSLPRKKFLACRENILESAAKMMELYGNQKVVIEVEYSEEVGTGLGPTLEFYTLVSRAFQNPDLGMWRNDCSFIVGKPVEHSGVLASSSGLFPRPWSGTSTTSDVLQKFVLLGTVVAKALQDGRVLDLPLSKAFYKLILGQELSSFDIHFVDPELCKTLVELQALVRRKKLFAEAHGDSGAAKCDLSFHGTKIEDLCLEFALPGYTDYDLAPYSANDMVNLDNLEEYIKGIVNATVCNGIQKQVEAFRSGFNQVFSIEHLRIFNEEELETMLCGECDLFSMNEVLDHIKFDHGYTSSSPPVEYLLQILHEFDREQQRAFLQFVTGSPRLPHGGLASLSPKLTIVRKHGSDSSDTDLPSVMTCANYLKLPPYSSKEKMKEKLIYAITEGQGSFHLS.

Over residues 1–21 (MENRGQKRMEVVEELPADKRA) the composition is skewed to basic and acidic residues. The interval 1–107 (MENRGQKRME…DYQRQRSSGD (107 aa)) is disordered. Positions 22 to 46 (CNSQDFRPSTSGSSVQAQANDTNPG) are enriched in polar residues. Acidic residues predominate over residues 67 to 90 (DEEEQEEQDKEDSDYGSCDSDEED). Over residues 91-107 (PRQRVLQDYQRQRSSGD) the composition is skewed to basic and acidic residues. ARM repeat units lie at residues 143 to 183 (EESL…YLCD), 186 to 226 (PPSV…KISR), 228 to 265 (EPVACLNAGAIMAVLSFIDFFSTSIQRVAISTVVNICK), and 267 to 306 (LSSESPSPFMDAVPILCTLLQYEDRQLVENVAICLTKIAD). The interval 833-881 (CQAESSSPMEIDSESSDASQLQGSQVEDQTQLPGQQNASSSETSSEKED) is disordered. The segment covering 849 to 875 (DASQLQGSQVEDQTQLPGQQNASSSET) has biased composition (polar residues). The tract at residues 1022 to 1096 (RPVPHSEFVS…IRHHPQHLSS (75 aa)) is K-box. In terms of domain architecture, HECT spans 1128-1502 (KMMELYGNQK…TEGQGSFHLS (375 aa)). The active-site Glycyl thioester intermediate is the Cys-1469.

This sequence belongs to the UPL family. K-HECT subfamily.

The enzyme catalyses S-ubiquitinyl-[E2 ubiquitin-conjugating enzyme]-L-cysteine + [acceptor protein]-L-lysine = [E2 ubiquitin-conjugating enzyme]-L-cysteine + N(6)-ubiquitinyl-[acceptor protein]-L-lysine.. It functions in the pathway protein modification; protein ubiquitination. Functionally, probable E3 ubiquitin-protein ligase which mediates ubiquitination and subsequent proteasomal degradation of target proteins. This chain is E3 ubiquitin-protein ligase UPL4 (UPL4), found in Arabidopsis thaliana (Mouse-ear cress).